Consider the following 177-residue polypeptide: Crossover junction endodeoxyribonuclease RuvC (177 aa).

Residues D7, E68, and D141 contribute to the active site. Mg(2+)-binding residues include D7, E68, and D141.

This sequence belongs to the RuvC family. Homodimer which binds Holliday junction (HJ) DNA. The HJ becomes 2-fold symmetrical on binding to RuvC with unstacked arms; it has a different conformation from HJ DNA in complex with RuvA. In the full resolvosome a probable DNA-RuvA(4)-RuvB(12)-RuvC(2) complex forms which resolves the HJ. Mg(2+) serves as cofactor.

Its subcellular location is the cytoplasm. It catalyses the reaction Endonucleolytic cleavage at a junction such as a reciprocal single-stranded crossover between two homologous DNA duplexes (Holliday junction).. In terms of biological role, the RuvA-RuvB-RuvC complex processes Holliday junction (HJ) DNA during genetic recombination and DNA repair. Endonuclease that resolves HJ intermediates. Cleaves cruciform DNA by making single-stranded nicks across the HJ at symmetrical positions within the homologous arms, yielding a 5'-phosphate and a 3'-hydroxyl group; requires a central core of homology in the junction. The consensus cleavage sequence is 5'-(A/T)TT(C/G)-3'. Cleavage occurs on the 3'-side of the TT dinucleotide at the point of strand exchange. HJ branch migration catalyzed by RuvA-RuvB allows RuvC to scan DNA until it finds its consensus sequence, where it cleaves and resolves the cruciform DNA. In Nocardioides sp. (strain ATCC BAA-499 / JS614), this protein is Crossover junction endodeoxyribonuclease RuvC.